The following is a 218-amino-acid chain: Large ribosomal subunit protein uL2c (218 aa).

Residues 165 to 192 (GVVKNPVDHPHGGGEGRSPIGRSHPVTP) are disordered.

The protein belongs to the universal ribosomal protein uL2 family. As to quaternary structure, part of the 50S ribosomal subunit.

The protein localises to the plastid. Its subcellular location is the chloroplast. The polypeptide is Large ribosomal subunit protein uL2c (rpl2) (Bigelowiella natans (Pedinomonas minutissima)).